Here is an 81-residue protein sequence, read N- to C-terminus: Large ribosomal subunit protein bL31B (81 aa).

The protein belongs to the bacterial ribosomal protein bL31 family. Type B subfamily. In terms of assembly, part of the 50S ribosomal subunit.

The polypeptide is Large ribosomal subunit protein bL31B (Lactococcus lactis subsp. cremoris (strain MG1363)).